The sequence spans 289 residues: 4-hydroxy-tetrahydrodipicolinate synthase (289 aa).

Threonine 46 provides a ligand contact to pyruvate. Catalysis depends on tyrosine 134, which acts as the Proton donor/acceptor. Lysine 162 functions as the Schiff-base intermediate with substrate in the catalytic mechanism. Valine 204 lines the pyruvate pocket.

The protein belongs to the DapA family. As to quaternary structure, homotetramer; dimer of dimers.

It is found in the cytoplasm. It catalyses the reaction L-aspartate 4-semialdehyde + pyruvate = (2S,4S)-4-hydroxy-2,3,4,5-tetrahydrodipicolinate + H2O + H(+). It participates in amino-acid biosynthesis; L-lysine biosynthesis via DAP pathway; (S)-tetrahydrodipicolinate from L-aspartate: step 3/4. Its function is as follows. Catalyzes the condensation of (S)-aspartate-beta-semialdehyde [(S)-ASA] and pyruvate to 4-hydroxy-tetrahydrodipicolinate (HTPA). The polypeptide is 4-hydroxy-tetrahydrodipicolinate synthase (Bacillus velezensis (strain DSM 23117 / BGSC 10A6 / LMG 26770 / FZB42) (Bacillus amyloliquefaciens subsp. plantarum)).